The sequence spans 451 residues: MKGIPSSSNQILNQDLVEDQSFELEDWLPITASRNANWYYSAFHNVTAIVGAGVLGLPYAMSELGWGPGVVVLILSWVITLYTFWQMIEMHEMFEGKRFDRYHELGQAAFGKKLGLYIVVPLQLLVETSACIVYMVTGGESLKKIHQLSVGDYECRKLKVRHFILIFASSQFVLSLLKNFNSISGVSLVAAVMSMSYSTIAWVASLTKGVANNVEYGYKRRNNTSVPLAFLGALGEMAFAYAGHNVVLEIQATIPSTPENPSKRPMWKGAIVAYIIVAFCYFPVALVGFWTFGNNVEENILKTLRGPKGLIIVANIFVIIHLMGSYQVYAMPVFDMIESVMIKKWHFSPTRVLRFTIRWTFVAATMGIAVALPHFSALLSFFGGFIFAPTTYFIPCIIWLILKKPKRFSLSWCINWICIILGVLVMIIAPIGGLAKLMNALKQPDSSCKST.

At 1–40 the chain is on the cytoplasmic side; sequence MKGIPSSSNQILNQDLVEDQSFELEDWLPITASRNANWYY. Residues 41–61 form a helical membrane-spanning segment; it reads SAFHNVTAIVGAGVLGLPYAM. The Extracellular segment spans residues 62–63; it reads SE. Residues 64 to 84 form a helical membrane-spanning segment; sequence LGWGPGVVVLILSWVITLYTF. Topologically, residues 85–115 are cytoplasmic; sequence WQMIEMHEMFEGKRFDRYHELGQAAFGKKLG. The chain crosses the membrane as a helical span at residues 116-136; the sequence is LYIVVPLQLLVETSACIVYMV. Residues 137–159 lie on the Extracellular side of the membrane; it reads TGGESLKKIHQLSVGDYECRKLK. Residues 160-177 form a helical membrane-spanning segment; that stretch reads VRHFILIFASSQFVLSLL. Residues 178 to 182 are Cytoplasmic-facing; the sequence is KNFNS. Residues 183–203 traverse the membrane as a helical segment; that stretch reads ISGVSLVAAVMSMSYSTIAWV. Topologically, residues 204 to 227 are extracellular; that stretch reads ASLTKGVANNVEYGYKRRNNTSVP. A helical membrane pass occupies residues 228-248; that stretch reads LAFLGALGEMAFAYAGHNVVL. The Cytoplasmic segment spans residues 249 to 269; the sequence is EIQATIPSTPENPSKRPMWKG. A helical transmembrane segment spans residues 270-290; it reads AIVAYIIVAFCYFPVALVGFW. The Extracellular segment spans residues 291–309; that stretch reads TFGNNVEENILKTLRGPKG. A helical membrane pass occupies residues 310-330; it reads LIIVANIFVIIHLMGSYQVYA. Over 331–358 the chain is Cytoplasmic; that stretch reads MPVFDMIESVMIKKWHFSPTRVLRFTIR. The helical transmembrane segment at 359–379 threads the bilayer; it reads WTFVAATMGIAVALPHFSALL. Serine 380 is a topological domain (extracellular). Residues 381 to 401 form a helical membrane-spanning segment; sequence FFGGFIFAPTTYFIPCIIWLI. Residues 402-413 are Cytoplasmic-facing; sequence LKKPKRFSLSWC. A helical membrane pass occupies residues 414–434; sequence INWICIILGVLVMIIAPIGGL. Over 435–451 the chain is Extracellular; sequence AKLMNALKQPDSSCKST.

The protein belongs to the amino acid/polyamine transporter 2 family. Amino acid/auxin permease (AAAP) (TC 2.A.18.2) subfamily.

Its subcellular location is the cell membrane. Functionally, amino acid transporter. The chain is Lysine histidine transporter-like 3 from Arabidopsis thaliana (Mouse-ear cress).